The chain runs to 42 residues: MKVKGSLKSHRNRDKNCKVVKRGGKVYIINKVKPRCKARQGS.

It belongs to the bacterial ribosomal protein bL36 family.

This chain is Large ribosomal subunit protein bL36, found in Wolbachia pipientis subsp. Culex pipiens (strain wPip).